The sequence spans 65 residues: VESP-VB2 (65 aa).

A signal peptide spans 1 to 23; it reads MKMSILFLFALIASLACLQLTFA. 7 AXPX repeats span residues 23-26, 27-30, 31-34, 35-38, 39-42, 43-46, and 47-50; these read AAPA, ASPF, ANPG, ASPE, AAPL, ADPL, and ADPF. Residues 24 to 49 constitute a propeptide that is removed on maturation; it reads APAASPFANPGASPEAAPLADPLADP. A Leucine amide modification is found at L62.

Belongs to the MCD family. Mastoparan subfamily. In terms of tissue distribution, expressed by the venom gland.

The protein localises to the secreted. In terms of biological role, antimicrobial peptide. Shows activity against both Gram-positive and -negative bacteria, as well against fungi. Also promotes important mast cell degranulation. Shows little hemolytic activity on rabbit and human erythrocytes. Its mast cell degranulation activity may be related to the activation of G-protein coupled receptors in mast cells as well as interaction with other proteins located in cell endosomal membranes in the mast cells. This is VESP-VB2 from Vespa bicolor (Black shield wasp).